A 143-amino-acid chain; its full sequence is Hemoglobin subunit alpha-A (143 aa).

The region spanning 2–143 (SLSGKDKSVV…LALALAERYR (142 aa)) is the Globin domain. Residue histidine 60 coordinates O2. Position 89 (histidine 89) interacts with heme b.

Belongs to the globin family. As to quaternary structure, heterotetramer of two alpha chains and two beta chains. As to expression, red blood cells.

Functionally, involved in oxygen transport from gills to the various peripheral tissues. In Seriola quinqueradiata (Five-ray yellowtail), this protein is Hemoglobin subunit alpha-A (hbaa).